The sequence spans 426 residues: Pregnancy-specific beta-1-glycoprotein 9 (426 aa).

Positions 1–34 (MGPLPAPSCTQRITWKGLLLTASLLNFWNPPTTA) are cleaved as a signal peptide. Residues 35–144 (EVTIEAQPPK…IRHFTFTLYL (110 aa)) form the Ig-like V-type domain. N-linked (GlcNAc...) asparagine glycosylation is found at Asn104 and Asn111. Residues 127 to 129 (RGD) carry the Cell attachment site motif. Ig-like C2-type domains follow at residues 147-234 (PKPY…VTLN), 242-326 (PYIT…PVIL), and 335-410 (PRIY…KSMT). Intrachain disulfides connect Cys169–Cys217, Cys262–Cys310, and Cys354–Cys394. 4 N-linked (GlcNAc...) asparagine glycosylation sites follow: Asn199, Asn268, Asn303, and Asn387.

Belongs to the immunoglobulin superfamily. CEA family. Interacts with latency-associated peptide; leading to TGFB1 activation.

It is found in the secreted. In terms of biological role, binds to the small latent transforming growth factor-beta complex, consisting of the N-terminal TGFB1 latency-associated peptide (LAP) and the mature form of TGFB1, thereby leading to the activation of TGFB1. The activation of TGFB1 leads to stimulation of naive CD4(+) T-cells to increase FoxP3 expression and to an increase in the number of FoxP3(+) regulatory T-cells. Induces the differentiation of a suppressive CD4(+)LAP(+)FoxP3(-) T-cell subset. Induces the secretion of TGFB1 in macrophages, but not in activated CD4(+) T-cells. May reduce the expression of several pro-inflammatory cytokines and chemokines by CD4(+) T-cells, including IL2 and IL6. This is Pregnancy-specific beta-1-glycoprotein 9 (PSG9) from Homo sapiens (Human).